Reading from the N-terminus, the 381-residue chain is Creatine kinase B-type (381 aa).

The Phosphagen kinase N-terminal domain maps to 11–98 (KMKYSVDDEY…FDPVIEDRHG (88 aa)). Position 72 (V72) interacts with creatine. The 243-residue stretch at 125 to 367 (YVLSSRVRTG…KLLIEMEKRL (243 aa)) folds into the Phosphagen kinase C-terminal domain. ATP contacts are provided by residues 128–132 (SSRVR), R130, R132, and H191. E232 is a creatine binding site. R236 is an ATP binding site. A Phosphothreonine; by autocatalysis modification is found at T282. S285 is a creatine binding site. The residue at position 285 (S285) is a Phosphoserine; by autocatalysis. The residue at position 289 (T289) is a Phosphothreonine; by autocatalysis. ATP contacts are provided by residues R292, R320, 320–325 (RGTGGV), and D335.

The protein belongs to the ATP:guanido phosphotransferase family. As to quaternary structure, dimer of identical or non-identical chains, which can be either B (brain type) or M (muscle type). With MM being the major form in skeletal muscle and myocardium, MB existing in myocardium, and BB existing in many tissues, especially brain. In terms of processing, ba-CK and Bb-CK are phosphorylated. The N-terminus of BA-CK is blocked. In terms of tissue distribution, expressed in almost all tissues and found enriched in various region of the brain, retina, heart, gizzard, gut and sperm.

The protein resides in the cytoplasm. It is found in the cytosol. It localises to the mitochondrion. The protein localises to the cell membrane. The catalysed reaction is creatine + ATP = N-phosphocreatine + ADP + H(+). Its function is as follows. Reversibly catalyzes the transfer of phosphate between ATP and various phosphogens (e.g. creatine phosphate). Creatine kinase isoenzymes play a central role in energy transduction in tissues with large, fluctuating energy demands, such as skeletal muscle, heart, brain and spermatozoa. This Gallus gallus (Chicken) protein is Creatine kinase B-type.